Here is a 97-residue protein sequence, read N- to C-terminus: Co-chaperonin GroES (97 aa).

This sequence belongs to the GroES chaperonin family. As to quaternary structure, heptamer of 7 subunits arranged in a ring. Interacts with the chaperonin GroEL.

The protein localises to the cytoplasm. In terms of biological role, together with the chaperonin GroEL, plays an essential role in assisting protein folding. The GroEL-GroES system forms a nano-cage that allows encapsulation of the non-native substrate proteins and provides a physical environment optimized to promote and accelerate protein folding. GroES binds to the apical surface of the GroEL ring, thereby capping the opening of the GroEL channel. The polypeptide is Co-chaperonin GroES (Stenotrophomonas maltophilia (Pseudomonas maltophilia)).